A 312-amino-acid chain; its full sequence is Olfactory receptor 1D5 (312 aa).

Residues 1 to 25 (MDGDNQSENSQFLLLGISESPEQQQ) are Extracellular-facing. A glycan (N-linked (GlcNAc...) asparagine) is linked at N5. A helical transmembrane segment spans residues 26–49 (ILFWMFLSMYLVTVLGNVLIILAI). Topologically, residues 50-57 (SSDSHLHT) are cytoplasmic. Residues 58-79 (PMYFFLANLSFTDLFFVTNTIP) traverse the membrane as a helical segment. The Extracellular portion of the chain corresponds to 80–100 (KMLVNFQSQNKAISYAGCLTQ). The cysteines at positions 97 and 189 are disulfide-linked. Residues 101–120 (LYFLVSLVTLDNLILAVMAY) traverse the membrane as a helical segment. The Cytoplasmic portion of the chain corresponds to 121 to 140 (DRYVAICCPLHYVTAMSPGL). A helical membrane pass occupies residues 141–158 (CVLLLSLCWGLSVLYGLL). Residues 159-196 (LTLLLTRVTFCGPREIHYLFCDMYILLRLACSNTHIIH) lie on the Extracellular side of the membrane. A helical membrane pass occupies residues 197 to 220 (TVLVATGCFIFLTPLGFMTTSYVC). Residues 221–237 (IVRTILQIPSASKKYKA) are Cytoplasmic-facing. A helical transmembrane segment spans residues 238 to 260 (FSTCASHLGVVSLFYGTLAMVYL). Residues 261 to 271 (QPLHTYSMKDS) lie on the Extracellular side of the membrane. Residues 272-291 (VATVMYAVVTPMMNPFIYSL) traverse the membrane as a helical segment. At 292–312 (RNKDMHGALGRVLRRLFQRPK) the chain is on the cytoplasmic side.

It belongs to the G-protein coupled receptor 1 family.

It localises to the cell membrane. In terms of biological role, odorant receptor. The polypeptide is Olfactory receptor 1D5 (OR1D5) (Pan paniscus (Pygmy chimpanzee)).